The chain runs to 284 residues: MDPILLDGKKLSEKIRNEIRREIEERKTKNLRIPKLATILVGNNPASETYVSMKIKACHGVGMGSEMIRLGEQTTTEELLSVIDKLNADPNVDGILLQHPSPSQIDERAAFDRISFRKDVDGVTTLSFGKLSMGVETYLPCTPYGIVLLLKEHGINVSGKNAVVVGRSPILGKPMAMLLTEMNATVTLCHSKTQNLPEIVRLADIVVGAVGKPEFIKADWISKGAVLLDAGYNPGNVGDIEISKAKNHSSFYTPVPGGVGPMTIAVLLLQTLYSSKEHFTPPVQ.

NADP(+) is bound by residues 166 to 168 and Ser-191; that span reads GRS.

This sequence belongs to the tetrahydrofolate dehydrogenase/cyclohydrolase family. In terms of assembly, homodimer.

The catalysed reaction is (6R)-5,10-methylene-5,6,7,8-tetrahydrofolate + NADP(+) = (6R)-5,10-methenyltetrahydrofolate + NADPH. The enzyme catalyses (6R)-5,10-methenyltetrahydrofolate + H2O = (6R)-10-formyltetrahydrofolate + H(+). It participates in one-carbon metabolism; tetrahydrofolate interconversion. Its function is as follows. Catalyzes the oxidation of 5,10-methylenetetrahydrofolate to 5,10-methenyltetrahydrofolate and then the hydrolysis of 5,10-methenyltetrahydrofolate to 10-formyltetrahydrofolate. In Leptospira borgpetersenii serovar Hardjo-bovis (strain JB197), this protein is Bifunctional protein FolD.